Consider the following 133-residue polypeptide: Profilin Sal k 4.0101 (133 aa).

An intrachain disulfide couples Cys95 to Cys117.

It belongs to the profilin family. Occurs in many kinds of cells as a complex with monomeric actin in a 1:1 ratio. As to expression, expressed in pollen.

It localises to the cytoplasm. The protein resides in the cytoskeleton. Binds to actin and affects the structure of the cytoskeleton. At high concentrations, profilin prevents the polymerization of actin, whereas it enhances it at low concentrations. The sequence is that of Profilin Sal k 4.0101 from Kali turgidum (Prickly saltwort).